A 510-amino-acid chain; its full sequence is ATP synthase subunit alpha (510 aa).

169–176 is a binding site for ATP; that stretch reads GDRQTGKS.

It belongs to the ATPase alpha/beta chains family. As to quaternary structure, F-type ATPases have 2 components, CF(1) - the catalytic core - and CF(0) - the membrane proton channel. CF(1) has five subunits: alpha(3), beta(3), gamma(1), delta(1), epsilon(1). CF(0) has three main subunits: a(1), b(2) and c(9-12). The alpha and beta chains form an alternating ring which encloses part of the gamma chain. CF(1) is attached to CF(0) by a central stalk formed by the gamma and epsilon chains, while a peripheral stalk is formed by the delta and b chains.

It localises to the cell membrane. The enzyme catalyses ATP + H2O + 4 H(+)(in) = ADP + phosphate + 5 H(+)(out). Functionally, produces ATP from ADP in the presence of a proton gradient across the membrane. The alpha chain is a regulatory subunit. The chain is ATP synthase subunit alpha from Wigglesworthia glossinidia brevipalpis.